We begin with the raw amino-acid sequence, 388 residues long: LL-diaminopimelate aminotransferase (388 aa).

Tyr-16 and Gly-41 together coordinate substrate. Pyridoxal 5'-phosphate-binding positions include Tyr-70, 104 to 105 (SK), Tyr-129, Asn-179, Tyr-210, and 239 to 241 (SLS). The substrate site is built by Lys-105, Tyr-129, and Asn-179. Lys-242 bears the N6-(pyridoxal phosphate)lysine mark. Residue Arg-250 participates in pyridoxal 5'-phosphate binding. Residue Arg-368 participates in substrate binding.

The protein belongs to the class-I pyridoxal-phosphate-dependent aminotransferase family. LL-diaminopimelate aminotransferase subfamily. Homodimer. Pyridoxal 5'-phosphate is required as a cofactor.

The enzyme catalyses (2S,6S)-2,6-diaminopimelate + 2-oxoglutarate = (S)-2,3,4,5-tetrahydrodipicolinate + L-glutamate + H2O + H(+). The protein operates within amino-acid biosynthesis; L-lysine biosynthesis via DAP pathway; LL-2,6-diaminopimelate from (S)-tetrahydrodipicolinate (aminotransferase route): step 1/1. Its function is as follows. Involved in the synthesis of meso-diaminopimelate (m-DAP or DL-DAP), required for both lysine and peptidoglycan biosynthesis. Catalyzes the direct conversion of tetrahydrodipicolinate to LL-diaminopimelate. This chain is LL-diaminopimelate aminotransferase, found in Nitratidesulfovibrio vulgaris (strain ATCC 29579 / DSM 644 / CCUG 34227 / NCIMB 8303 / VKM B-1760 / Hildenborough) (Desulfovibrio vulgaris).